The following is a 363-amino-acid chain: NAD(P)H-quinone oxidoreductase subunit 1, chloroplastic (363 aa).

Helical transmembrane passes span 28–48 (WVLA…LVIV), 98–118 (FSIG…VIPF), 129–149 (IGIF…LMSG), 253–273 (FGLF…FVTV), 274–294 (LYLG…LVEI), 300–320 (IFGT…FLFI), and 336–356 (LLNL…LLTT).

Belongs to the complex I subunit 1 family. NDH is composed of at least 16 different subunits, 5 of which are encoded in the nucleus.

The protein resides in the plastid. Its subcellular location is the chloroplast thylakoid membrane. It catalyses the reaction a plastoquinone + NADH + (n+1) H(+)(in) = a plastoquinol + NAD(+) + n H(+)(out). The enzyme catalyses a plastoquinone + NADPH + (n+1) H(+)(in) = a plastoquinol + NADP(+) + n H(+)(out). Functionally, NDH shuttles electrons from NAD(P)H:plastoquinone, via FMN and iron-sulfur (Fe-S) centers, to quinones in the photosynthetic chain and possibly in a chloroplast respiratory chain. The immediate electron acceptor for the enzyme in this species is believed to be plastoquinone. Couples the redox reaction to proton translocation, and thus conserves the redox energy in a proton gradient. This Citrus sinensis (Sweet orange) protein is NAD(P)H-quinone oxidoreductase subunit 1, chloroplastic.